Here is a 294-residue protein sequence, read N- to C-terminus: Elongation factor Ts (294 aa).

Residues T80–V83 are involved in Mg(2+) ion dislocation from EF-Tu.

This sequence belongs to the EF-Ts family.

Its subcellular location is the cytoplasm. Its function is as follows. Associates with the EF-Tu.GDP complex and induces the exchange of GDP to GTP. It remains bound to the aminoacyl-tRNA.EF-Tu.GTP complex up to the GTP hydrolysis stage on the ribosome. This is Elongation factor Ts from Listeria monocytogenes serovar 1/2a (strain ATCC BAA-679 / EGD-e).